The chain runs to 457 residues: MNTTNKQLTEELNNTESNNDHNDFAENNIINLKQLKRKLPEELQVQAEELKIENISSLLKQELVFAILKKSVEQGGLIVGEGVLEVLPDGFGFLRSPEVNYLAGPDDIYISPSQIRRFGLRTGDTVEGQIRAPKAGERYFALLKVNRVNFEDPAKAYHRVHFDNLTPLYPDEKLGLELENNSKDSKDFSTRVIELVAPMGKGQRALIVAPPRTGKTVLLQNIAHAITTNNPEVFLIVLLIDERPEEVTDMQRSVRGEVVSSTFDEPASRHVQLAEMVIEKAKRLVEHKKDVVILVDAITRLARAYNTVVPSSGKVLTGGVDANALQRPKRFFGAARNIENGGSLTIIGTALIETGSRMDEVIFEEFKGTGNSEIVLDRKIADKRIYPAIDITRSGTRKEDLLVDKIILNKMWVLRRIIDPMGSSEAIEFLLKKLENTKTNCAFFEMMKSPERPRNGL.

Positions 1–23 (MNTTNKQLTEELNNTESNNDHND) are disordered. The 76-residue stretch at 77-152 (LIVGEGVLEV…LKVNRVNFED (76 aa)) folds into the Rho RNA-BD domain. Residues 200–205 (GKGQRA), 212–217 (RTGKTV), and R243 each bind ATP.

This sequence belongs to the Rho family. Homohexamer. The homohexamer assembles into an open ring structure.

Its function is as follows. Facilitates transcription termination by a mechanism that involves Rho binding to the nascent RNA, activation of Rho's RNA-dependent ATPase activity, and release of the mRNA from the DNA template. This chain is Transcription termination factor Rho, found in Rickettsia prowazekii (strain Madrid E).